The primary structure comprises 252 residues: 5'-nucleotidase SurE (252 aa).

Residues D8, D9, S42, and N94 each contribute to the a divalent metal cation site.

This sequence belongs to the SurE nucleotidase family. It depends on a divalent metal cation as a cofactor.

It localises to the cytoplasm. The catalysed reaction is a ribonucleoside 5'-phosphate + H2O = a ribonucleoside + phosphate. Its function is as follows. Nucleotidase that shows phosphatase activity on nucleoside 5'-monophosphates. This chain is 5'-nucleotidase SurE, found in Ehrlichia ruminantium (strain Welgevonden).